The sequence spans 122 residues: Structural protein p14.5 (122 aa).

2 disordered regions span residues 1–27 (MADFNSPIQYLKEDSRDRTSIGSLEYD) and 85–122 (TSLVPEETDNKPEDDEESGAKPKKKKHLFPKLSSHKSK). N-acetylalanine; by host is present on Ala-2. Over residues 105–122 (KPKKKKHLFPKLSSHKSK) the composition is skewed to basic residues.

It belongs to the asfivirus structural protein p14.5 family. Interacts with the major capsid protein. Interacts with host IRF3; this interaction interferes with the recruitment of IRF3 to TBK1. Acetylated.

It localises to the virion. Structural protein required for transport of intracellular particles from the assembly sites to the plasma membrane. Binds to both ssDNA and dsDNA. Suppressed the activation of the cGAS/STING pathway by interfering with the recruitment of IRF3 to TBK1, which in turn suppresses IRF3 phosphorylation, decreasing interferon production. The chain is Structural protein p14.5 from African swine fever virus (isolate Tick/Malawi/Lil 20-1/1983) (ASFV).